Here is a 65-residue protein sequence, read N- to C-terminus: Large ribosomal subunit protein bL35 (65 aa).

It belongs to the bacterial ribosomal protein bL35 family.

The protein is Large ribosomal subunit protein bL35 of Clostridium kluyveri (strain NBRC 12016).